The following is a 353-amino-acid chain: Photosystem II protein D1 (353 aa).

Residue threonine 2 is modified to N-acetylthreonine. Threonine 2 bears the Phosphothreonine mark. A run of 3 helical transmembrane segments spans residues 29 to 46 (YIGWFGVLMIPTLLTATS), 118 to 133 (HFLLGVACYMGREWEL), and 142 to 156 (WIAVAYSAPVAAATA). Histidine 118 is a chlorophyll a binding site. Tyrosine 126 provides a ligand contact to pheophytin a. The [CaMn4O5] cluster site is built by aspartate 170 and glutamate 189. Residues 197 to 218 (FHMLGVAGVFGGSLFSAMHGSL) form a helical membrane-spanning segment. Residue histidine 198 coordinates chlorophyll a. A quinone is bound by residues histidine 215 and 264-265 (SF). Histidine 215 provides a ligand contact to Fe cation. Histidine 272 is a binding site for Fe cation. The helical transmembrane segment at 274–288 (LLAAWPVVGIWFTAL) threads the bilayer. Residues histidine 332, glutamate 333, aspartate 342, and alanine 344 each coordinate [CaMn4O5] cluster. The propeptide occupies 345–353 (AVEAPSTNG).

Belongs to the reaction center PufL/M/PsbA/D family. PSII is composed of 1 copy each of membrane proteins PsbA, PsbB, PsbC, PsbD, PsbE, PsbF, PsbH, PsbI, PsbJ, PsbK, PsbL, PsbM, PsbT, PsbX, PsbY, PsbZ, Psb30/Ycf12, at least 3 peripheral proteins of the oxygen-evolving complex and a large number of cofactors. It forms dimeric complexes. It depends on The D1/D2 heterodimer binds P680, chlorophylls that are the primary electron donor of PSII, and subsequent electron acceptors. It shares a non-heme iron and each subunit binds pheophytin, quinone, additional chlorophylls, carotenoids and lipids. D1 provides most of the ligands for the Mn4-Ca-O5 cluster of the oxygen-evolving complex (OEC). There is also a Cl(-1) ion associated with D1 and D2, which is required for oxygen evolution. The PSII complex binds additional chlorophylls, carotenoids and specific lipids. as a cofactor. Tyr-161 forms a radical intermediate that is referred to as redox-active TyrZ, YZ or Y-Z. In terms of processing, C-terminally processed by CTPA; processing is essential to allow assembly of the oxygen-evolving complex and thus photosynthetic growth.

The protein localises to the plastid. It localises to the chloroplast thylakoid membrane. The catalysed reaction is 2 a plastoquinone + 4 hnu + 2 H2O = 2 a plastoquinol + O2. In terms of biological role, photosystem II (PSII) is a light-driven water:plastoquinone oxidoreductase that uses light energy to abstract electrons from H(2)O, generating O(2) and a proton gradient subsequently used for ATP formation. It consists of a core antenna complex that captures photons, and an electron transfer chain that converts photonic excitation into a charge separation. The D1/D2 (PsbA/PsbD) reaction center heterodimer binds P680, the primary electron donor of PSII as well as several subsequent electron acceptors. This chain is Photosystem II protein D1, found in Dioscorea elephantipes (Elephant's foot yam).